A 248-amino-acid chain; its full sequence is Adenosylcobinamide-GDP ribazoletransferase (248 aa).

Helical transmembrane passes span 24–44 (EVNL…IGAW), 47–67 (LVFT…AGLF), 70–90 (IIIT…GLFS), 106–126 (VGAN…ALFL), 134–154 (IGWL…LLFA), 165–185 (LGSI…LFVL), 186–206 (FILG…VILF), and 228–248 (AGGQ…WGLI).

Belongs to the CobS family. Requires Mg(2+) as cofactor.

Its subcellular location is the cell membrane. The catalysed reaction is alpha-ribazole + adenosylcob(III)inamide-GDP = adenosylcob(III)alamin + GMP + H(+). It carries out the reaction alpha-ribazole 5'-phosphate + adenosylcob(III)inamide-GDP = adenosylcob(III)alamin 5'-phosphate + GMP + H(+). It functions in the pathway cofactor biosynthesis; adenosylcobalamin biosynthesis; adenosylcobalamin from cob(II)yrinate a,c-diamide: step 7/7. Functionally, joins adenosylcobinamide-GDP and alpha-ribazole to generate adenosylcobalamin (Ado-cobalamin). Also synthesizes adenosylcobalamin 5'-phosphate from adenosylcobinamide-GDP and alpha-ribazole 5'-phosphate. The protein is Adenosylcobinamide-GDP ribazoletransferase of Listeria welshimeri serovar 6b (strain ATCC 35897 / DSM 20650 / CCUG 15529 / CIP 8149 / NCTC 11857 / SLCC 5334 / V8).